Reading from the N-terminus, the 218-residue chain is Zinc metalloproteinase-disintegrin-like bothrojarin-2 (218 aa).

The Disintegrin domain occupies 14-100 (PPVCGNELLE…QCPTDDFHKN (87 aa)). Positions 16, 21, 23, 26, and 29 each coordinate Ca(2+). 10 disulfides stabilise this stretch: C28–C46, C30–C41, C40–C63, C54–C60, C59–C85, C72–C92, C79–C111, C104–C116, C123–C173, and C151–C161. The D/ECD-tripeptide signature appears at 78-80 (ECD).

Belongs to the venom metalloproteinase (M12B) family. P-III subfamily. P-IIIa sub-subfamily. As to quaternary structure, monomer. It depends on Zn(2+) as a cofactor. In terms of processing, glycosylated. In terms of tissue distribution, expressed by the venom gland.

It localises to the secreted. In terms of biological role, the hemorrhagic metalloproteinase-disintegrin-like bothrojarin-1 is a potent inhibitor of collagen-induced platelet aggregation by blockage of alpha-2/beta-1 (ITGA2/ITGB1) integrin. It does not present any fibrinogen-clotting activity. In Bothrops jararaca (Jararaca), this protein is Zinc metalloproteinase-disintegrin-like bothrojarin-2.